A 641-amino-acid chain; its full sequence is Frizzled-1 (641 aa).

An N-terminal signal peptide occupies residues 1 to 68; that stretch reads MAEEAVPSES…WLLEAPLLLG (68 aa). The Extracellular portion of the chain corresponds to 69–316; the sequence is VRAQPAGQVS…PEELRFSRTW (248 aa). The segment at 74–99 is disordered; it reads AGQVSGPGQQRPPPPQPQQGGQQYNG. In terms of domain architecture, FZ spans 106–224; the sequence is PDHGYCQPIS…HGAGELCVGQ (119 aa). Intrachain disulfides connect cysteine 111–cysteine 172, cysteine 119–cysteine 165, cysteine 156–cysteine 192, cysteine 182–cysteine 221, and cysteine 186–cysteine 209. Asparagine 125 carries N-linked (GlcNAc...) asparagine glycosylation. Residue asparagine 225 is glycosylated (N-linked (GlcNAc...) asparagine). A helical transmembrane segment spans residues 317 to 337; that stretch reads IGIWSVLCCASTLFTVLTYLV. Residues 338–348 lie on the Cytoplasmic side of the membrane; it reads DMRRFSYPERP. The chain crosses the membrane as a helical span at residues 349–369; it reads IIFLSGCYTAVAVAYIAGFLL. At 370-396 the chain is on the extracellular side; that stretch reads EDRVVCNDKFAEDGARTVAQGTKKEGC. A helical membrane pass occupies residues 397-417; that stretch reads TILFMMLYFFSMASSIWWVIL. Residues 418–439 are Cytoplasmic-facing; the sequence is SLTWFLAAGMKWGHEAIEANSQ. A helical membrane pass occupies residues 440–460; it reads YFHLAAWAVPAIKTITILALG. Topologically, residues 461–483 are extracellular; the sequence is QVDGDVLSGVCFVGLNNVDALRG. A helical transmembrane segment spans residues 484-504; it reads FVLAPLFVYLFIGTSFLLAGF. Topologically, residues 505 to 530 are cytoplasmic; the sequence is VSLFRIRTIMKHDGTKTEKLEKLMVR. The chain crosses the membrane as a helical span at residues 531-551; sequence IGVFSVLYTVPATIVIACYFY. Residues 552-595 lie on the Extracellular side of the membrane; the sequence is EQAFRDQWERSWVAQSCKSYAIPCPHLQGGGGVPPHPPMSPDFT. The helical transmembrane segment at 596–616 threads the bilayer; sequence VFMIKYLMTLIVGITSGFWIW. Residues 617-641 lie on the Cytoplasmic side of the membrane; the sequence is SGKTLNSWRKFYTRLTNSKQGETTV. A Lys-Thr-X-X-X-Trp motif, mediates interaction with the PDZ domain of Dvl family members motif is present at residues 619–624; the sequence is KTLNSW. The short motif at 639–641 is the PDZ-binding element; it reads TTV.

It belongs to the G-protein coupled receptor Fz/Smo family. Interacts with MYOC. Interacts with WNT7B. Post-translationally, ubiquitinated by ZNRF3, leading to its degradation by the proteasome. Widely expressed. Most abundant in kidney, liver, uterus, ovary and heart. Lower levels seen in brain and intestine. Extremely low in calvaria, mammary glands and testis.

It is found in the cell membrane. In terms of biological role, receptor for Wnt proteins. Activated by WNT3A, WNT3, WNT1 and to a lesser extent WNT2, but apparently not by WNT4, WNT5A, WNT5B, WNT6 or WNT7A. Contradictory results have been reported for activation by WNT7B. Functions in the canonical Wnt/beta-catenin signaling pathway. The canonical Wnt/beta-catenin signaling pathway leads to the activation of disheveled proteins, inhibition of GSK-3 kinase, nuclear accumulation of beta-catenin and activation of Wnt target genes. A second signaling pathway involving PKC and calcium fluxes has been seen for some family members, but it is not yet clear if it represents a distinct pathway or if it can be integrated in the canonical pathway, as PKC seems to be required for Wnt-mediated inactivation of GSK-3 kinase. Both pathways seem to involve interactions with G-proteins. May be involved in transduction and intercellular transmission of polarity information during tissue morphogenesis and/or in differentiated tissues. This Rattus norvegicus (Rat) protein is Frizzled-1 (Fzd1).